Reading from the N-terminus, the 454-residue chain is tRNA modification GTPase MnmE (454 aa).

Residues arginine 23, glutamate 80, and lysine 120 each contribute to the (6S)-5-formyl-5,6,7,8-tetrahydrofolate site. The 162-residue stretch at glycine 216–glycine 377 folds into the TrmE-type G domain. Position 226 (asparagine 226) interacts with K(+). GTP is bound by residues asparagine 226 to serine 231, threonine 245 to threonine 251, aspartate 270 to glycine 273, asparagine 335 to aspartate 338, and serine 358 to arginine 360. Serine 230 provides a ligand contact to Mg(2+). Residues threonine 245, isoleucine 247, and threonine 250 each contribute to the K(+) site. Residue threonine 251 coordinates Mg(2+). Residue lysine 454 coordinates (6S)-5-formyl-5,6,7,8-tetrahydrofolate.

Belongs to the TRAFAC class TrmE-Era-EngA-EngB-Septin-like GTPase superfamily. TrmE GTPase family. As to quaternary structure, homodimer. Heterotetramer of two MnmE and two MnmG subunits. Requires K(+) as cofactor.

The protein resides in the cytoplasm. Functionally, exhibits a very high intrinsic GTPase hydrolysis rate. Involved in the addition of a carboxymethylaminomethyl (cmnm) group at the wobble position (U34) of certain tRNAs, forming tRNA-cmnm(5)s(2)U34. The sequence is that of tRNA modification GTPase MnmE from Klebsiella pneumoniae (strain 342).